Here is a 297-residue protein sequence, read N- to C-terminus: Cyclin-dependent kinase 1 (297 aa).

Residues Phe4–Phe287 enclose the Protein kinase domain. ATP-binding positions include Ile10–Val18 and Lys33. At Thr14 the chain carries Phosphothreonine. Position 15 is a phosphotyrosine (Tyr15). Asp128 acts as the Proton acceptor in catalysis. Position 160 is a phosphotyrosine (Tyr160). Thr161 bears the Phosphothreonine; by CAK mark.

The protein belongs to the protein kinase superfamily. CMGC Ser/Thr protein kinase family. CDC2/CDKX subfamily. As to quaternary structure, forms a stable but non-covalent complex with a regulatory subunit and with a cyclin. Component of the Frs-CycA-Cdk1 complex composed of Cdk1, CycA and Z600.

The protein localises to the nucleus. It carries out the reaction L-seryl-[protein] + ATP = O-phospho-L-seryl-[protein] + ADP + H(+). The enzyme catalyses L-threonyl-[protein] + ATP = O-phospho-L-threonyl-[protein] + ADP + H(+). It catalyses the reaction [DNA-directed RNA polymerase] + ATP = phospho-[DNA-directed RNA polymerase] + ADP + H(+). Phosphorylation at Thr-14 or Tyr-15 inactivates the enzyme, while phosphorylation at Thr-161 activates it. Its function is as follows. Plays a key role in the control of the eukaryotic cell cycle. Required for entry into S-phase and mitosis. In embryos, promotes the release of Rif1 from chromatin during mid-blastula transition. p34 is a component of the kinase complex that phosphorylates the repetitive C-terminus of RNA polymerase II. The sequence is that of Cyclin-dependent kinase 1 from Drosophila melanogaster (Fruit fly).